Here is a 110-residue protein sequence, read N- to C-terminus: Minor capsid protein VP2 (110 aa).

The protein belongs to the vesivirus VP2 protein family. As to quaternary structure, homooligomer. The portal-like structure consists in 12 copies of VP2. Interacts with capsid protein VP1.

The protein resides in the virion. It localises to the host cytoplasm. Functionally, minor structural protein that forms a portal-like structure at a unique three-fold axis of symmetry, following binding to the host receptor. The channel formed by VP2 may allow the delivery of the viral genome through the host endosomal membrane. The chain is Minor capsid protein VP2 from Vesicular exanthema of swine virus serotype A48 (isolate Swine/United States/A48/1948) (VESV).